We begin with the raw amino-acid sequence, 339 residues long: Methylglutaconyl-CoA hydratase, mitochondrial (339 aa).

Residues 1 to 67 (MAAAVAAAPG…AGGPAPKRGY (67 aa)) constitute a mitochondrion transit peptide. Position 100 is an N6-acetyllysine; alternate (lysine 100). Lysine 100 carries the N6-succinyllysine; alternate modification. The tract at residues 105–119 (KNLIKMLSKAVDALK) is RNA-binding. Residue lysine 109 is modified to N6-succinyllysine. N6-acetyllysine; alternate occurs at positions 113 and 144. Lysine 113 and lysine 144 each carry N6-succinyllysine; alternate. Lysine 148 and lysine 160 each carry N6-succinyllysine. An N6-acetyllysine; alternate mark is found at lysine 204 and lysine 211. N6-succinyllysine; alternate is present on residues lysine 204 and lysine 211. An N6-succinyllysine modification is found at lysine 329.

It belongs to the enoyl-CoA hydratase/isomerase family. Homohexamer.

The protein resides in the mitochondrion. It catalyses the reaction (3S)-3-hydroxy-3-methylglutaryl-CoA = 3-methyl-(2E)-glutaconyl-CoA + H2O. The enzyme catalyses (3S)-citramalyl-CoA = itaconyl-CoA + H2O. It carries out the reaction 3-hydroxyisovaleryl-CoA = 3-methylbut-2-enoyl-CoA + H2O. The catalysed reaction is (S)-3-hydroxyglutaryl-CoA = (2E)-glutaconyl-CoA + H2O. It participates in amino-acid degradation; L-leucine degradation; (S)-3-hydroxy-3-methylglutaryl-CoA from 3-isovaleryl-CoA: step 3/3. Functionally, catalyzes the fifth step in the leucine degradation pathway, the reversible hydration of 3-methylglutaconyl-CoA (3-MG-CoA) to 3-hydroxy-3-methylglutaryl-CoA (HMG-CoA). Can catalyze the reverse reaction but at a much lower rate in vitro. HMG-CoA is then quickly degraded by another enzyme (such as HMG-CoA lyase) to give acetyl-CoA and acetoacetate. Uses other substrates such as (2E)-glutaconyl-CoA efficiently in vitro, and to a lesser extent 3-methylcrotonyl-CoA (3-methyl-(2E)-butenoyl-CoA), crotonyl-CoA ((2E)-butenoyl-CoA) and 3-hydroxybutanoyl-CoA (the missing carboxylate reduces affinity to the active site). Originally it was identified as an RNA-binding protein as it binds to AU-rich elements (AREs) in vitro. AREs direct rapid RNA degradation and mRNA deadenylation. Might have itaconyl-CoA hydratase activity, converting itaconyl-CoA into citramalyl-CoA in the C5-dicarboxylate catabolism pathway. The C5-dicarboxylate catabolism pathway is required to detoxify itaconate, an antimicrobial metabolite and immunomodulator produced by macrophages during certain infections, that can act as a vitamin B12-poisoning metabolite. This Homo sapiens (Human) protein is Methylglutaconyl-CoA hydratase, mitochondrial (AUH).